We begin with the raw amino-acid sequence, 427 residues long: Gustatory receptor for sugar taste 43a (427 aa).

Over 1-37 (MEISQPSIGIFYISKVLALAPYATVRNSKGRVEIGRS) the chain is Cytoplasmic. Residues 38–63 (WLFTVYSATLTVVMVFLTYRGLLFDA) traverse the membrane as a helical segment. Topologically, residues 64–75 (NSEIPVRMKSAT) are extracellular. 2 residues coordinate beta-D-fructose: Arg-70 and Asp-83. A helical transmembrane segment spans residues 76–96 (SKVVTALDVSVVVMAIVSGVY). Residues 97–135 (CGLFSLNDTLELNDRLNKIDNTLNAYNNFRRDRWRALGM) are Cytoplasmic-facing. The helical transmembrane segment at 136-158 (AAVSLLAISILVGLDVGTWMRIA) threads the bilayer. Topologically, residues 159–168 (QDMNIAQSDT) are extracellular. The helical transmembrane segment at 169–193 (ELNVHWYIPFYSLYFILTGLQVNIA) threads the bilayer. Residue Tyr-182 coordinates beta-D-fructose. The Cytoplasmic portion of the chain corresponds to 194-293 (NTAYGLGRRF…CVHLLSNSFG (100 aa)). A helical transmembrane segment spans residues 294-316 (IAVLFILVSCLLHLVATAYFLFL). Residue Thr-310 participates in beta-D-fructose binding. Residues 317-324 (ELLSKRDN) lie on the Extracellular side of the membrane. A helical membrane pass occupies residues 325 to 346 (GYLWVQMLWICFHFLRLLMVVE). His-337 serves as a coordination point for beta-D-fructose. The Cytoplasmic portion of the chain corresponds to 347–402 (PCHLAARESRKTIQIVCEIERKVHEPILAEAVKKFWQQLLVVDADFSACGLCRVNR). A helical membrane pass occupies residues 403–423 (TILTSFASAIATYLVILIQFQ). Gln-421 is a Ca(2+) binding site. At 424 to 427 (RTNG) the chain is on the extracellular side.

Belongs to the insect chemoreceptor superfamily. Gustatory receptor (GR) family. Gr21a subfamily. As to quaternary structure, homotetramer. As to expression, expressed in the adult labellar chemosensory neurons and in the adult head, abdomen, leg and wing. In larvae, is expressed in taste organs, as well as the brain and the gastrointestinal system.

The protein localises to the cell membrane. Functionally, gustatory receptor which mediates acceptance or avoidance behavior, depending on its substrates. Gr43a is the main sugar receptor in larvae. Functions as a narrowly tuned fructose receptor in taste neurons but also as a fructose receptor in the brain. Necessary and sufficient to sense hemolymph fructose and promote feeding in hungry flies but suppress feeding in satiated flies. The chain is Gustatory receptor for sugar taste 43a (Gr43a) from Drosophila melanogaster (Fruit fly).